Here is a 485-residue protein sequence, read N- to C-terminus: UDP-N-acetylmuramoyl-L-alanyl-D-glutamate--2,6-diaminopimelate ligase (485 aa).

S30 contributes to the UDP-N-acetyl-alpha-D-muramoyl-L-alanyl-D-glutamate binding site. 111-117 (GTNGKTT) lines the ATP pocket. Residues 153–154 (TT), S180, Q186, and R188 each bind UDP-N-acetyl-alpha-D-muramoyl-L-alanyl-D-glutamate. Position 220 is an N6-carboxylysine (K220). Meso-2,6-diaminopimelate-binding positions include R378, 402–405 (DNPR), G455, and E459. The short motif at 402-405 (DNPR) is the Meso-diaminopimelate recognition motif element.

The protein belongs to the MurCDEF family. MurE subfamily. It depends on Mg(2+) as a cofactor. Post-translationally, carboxylation is probably crucial for Mg(2+) binding and, consequently, for the gamma-phosphate positioning of ATP.

Its subcellular location is the cytoplasm. It catalyses the reaction UDP-N-acetyl-alpha-D-muramoyl-L-alanyl-D-glutamate + meso-2,6-diaminopimelate + ATP = UDP-N-acetyl-alpha-D-muramoyl-L-alanyl-gamma-D-glutamyl-meso-2,6-diaminopimelate + ADP + phosphate + H(+). Its pathway is cell wall biogenesis; peptidoglycan biosynthesis. Functionally, catalyzes the addition of meso-diaminopimelic acid to the nucleotide precursor UDP-N-acetylmuramoyl-L-alanyl-D-glutamate (UMAG) in the biosynthesis of bacterial cell-wall peptidoglycan. This Bacteroides fragilis (strain ATCC 25285 / DSM 2151 / CCUG 4856 / JCM 11019 / LMG 10263 / NCTC 9343 / Onslow / VPI 2553 / EN-2) protein is UDP-N-acetylmuramoyl-L-alanyl-D-glutamate--2,6-diaminopimelate ligase.